A 248-amino-acid polypeptide reads, in one-letter code: Phosphoribosylformylglycinamidine synthase subunit PurQ (248 aa).

The region spanning 6-248 (AMVLRMEGTN…IFFRILYNST (243 aa)) is the Glutamine amidotransferase type-1 domain. Cys-95 functions as the Nucleophile in the catalytic mechanism. Active-site residues include His-215 and Glu-217.

Part of the FGAM synthase complex composed of 1 PurL, 1 PurQ and 2 PurS subunits.

It localises to the cytoplasm. The catalysed reaction is N(2)-formyl-N(1)-(5-phospho-beta-D-ribosyl)glycinamide + L-glutamine + ATP + H2O = 2-formamido-N(1)-(5-O-phospho-beta-D-ribosyl)acetamidine + L-glutamate + ADP + phosphate + H(+). It carries out the reaction L-glutamine + H2O = L-glutamate + NH4(+). The protein operates within purine metabolism; IMP biosynthesis via de novo pathway; 5-amino-1-(5-phospho-D-ribosyl)imidazole from N(2)-formyl-N(1)-(5-phospho-D-ribosyl)glycinamide: step 1/2. Its function is as follows. Part of the phosphoribosylformylglycinamidine synthase complex involved in the purines biosynthetic pathway. Catalyzes the ATP-dependent conversion of formylglycinamide ribonucleotide (FGAR) and glutamine to yield formylglycinamidine ribonucleotide (FGAM) and glutamate. The FGAM synthase complex is composed of three subunits. PurQ produces an ammonia molecule by converting glutamine to glutamate. PurL transfers the ammonia molecule to FGAR to form FGAM in an ATP-dependent manner. PurS interacts with PurQ and PurL and is thought to assist in the transfer of the ammonia molecule from PurQ to PurL. In Picrophilus torridus (strain ATCC 700027 / DSM 9790 / JCM 10055 / NBRC 100828 / KAW 2/3), this protein is Phosphoribosylformylglycinamidine synthase subunit PurQ.